Consider the following 108-residue polypeptide: Large ribosomal subunit protein P1 (108 aa).

The segment at 67-108 is disordered; it reads PAAAPAEAGGEEKKEEEKKEEEEKEEEVSEEEALAGLSALFG. Residues 84-99 are compositionally biased toward acidic residues; it reads KKEEEEKEEEVSEEEA.

The protein belongs to the eukaryotic ribosomal protein P1/P2 family. In terms of assembly, part of the 50S ribosomal subunit. Homodimer, it forms part of the ribosomal stalk which helps the ribosome interact with GTP-bound translation factors. Forms a heptameric uL10/P0(P1)2(P1)2(P1)2 complex, where uL10/P0 forms an elongated spine to which the P1 dimers bind in a sequential fashion.

Its function is as follows. Forms part of the ribosomal stalk, playing a central role in the interaction of the ribosome with GTP-bound translation factors. The stalk complex of P.horikoshii binds to E.coli large subunits and confers on them the ability to interact with eukaryotic elongation factors. Each succesive P1 dimer bound along the P0 spine increases the GTPase activity of elongation factors and increases translation by reconsituted ribosomes. This Pyrococcus horikoshii (strain ATCC 700860 / DSM 12428 / JCM 9974 / NBRC 100139 / OT-3) protein is Large ribosomal subunit protein P1.